Consider the following 459-residue polypeptide: Ribulose bisphosphate carboxylase (459 aa).

Asparagine 111 is a binding site for substrate. Lysine 166 functions as the Proton acceptor in the catalytic mechanism. Lysine 168 serves as a coordination point for substrate. 3 residues coordinate Mg(2+): lysine 191, aspartate 193, and glutamate 194. Lysine 191 carries the post-translational modification N6-carboxylysine. The active-site Proton acceptor is the histidine 287. Positions 288, 321, and 368 each coordinate substrate.

The protein belongs to the RuBisCO large chain family. Type II subfamily. As to quaternary structure, homodimer. Mg(2+) serves as cofactor.

It carries out the reaction 2 (2R)-3-phosphoglycerate + 2 H(+) = D-ribulose 1,5-bisphosphate + CO2 + H2O. The catalysed reaction is D-ribulose 1,5-bisphosphate + O2 = 2-phosphoglycolate + (2R)-3-phosphoglycerate + 2 H(+). RuBisCO catalyzes two reactions: the carboxylation of D-ribulose 1,5-bisphosphate, the primary event in carbon dioxide fixation, as well as the oxidative fragmentation of the pentose substrate. Both reactions occur simultaneously and in competition at the same active site. The polypeptide is Ribulose bisphosphate carboxylase (Polaromonas naphthalenivorans (strain CJ2)).